The primary structure comprises 290 residues: Fructose-bisphosphate aldolase (290 aa).

Ser51 provides a ligand contact to D-glyceraldehyde 3-phosphate. The Proton donor role is filled by Asp86. His87, Asp107, Glu137, and His179 together coordinate Zn(2+). Gly180 contacts dihydroxyacetone phosphate. Residue His208 coordinates Zn(2+). Residues 209–211 (GGS) and 230–233 (NINT) each bind dihydroxyacetone phosphate.

This sequence belongs to the class II fructose-bisphosphate aldolase family. Homodimer. The cofactor is Zn(2+).

It carries out the reaction beta-D-fructose 1,6-bisphosphate = D-glyceraldehyde 3-phosphate + dihydroxyacetone phosphate. Its pathway is carbohydrate degradation; glycolysis; D-glyceraldehyde 3-phosphate and glycerone phosphate from D-glucose: step 4/4. Catalyzes the aldol condensation of dihydroxyacetone phosphate (DHAP or glycerone-phosphate) with glyceraldehyde 3-phosphate (G3P) to form fructose 1,6-bisphosphate (FBP) in gluconeogenesis and the reverse reaction in glycolysis. This Ureaplasma parvum serovar 3 (strain ATCC 700970) protein is Fructose-bisphosphate aldolase (fba).